The sequence spans 354 residues: Glutaminyl-peptide cyclotransferase (354 aa).

The N-terminal 8 residues, 1-8, are a transit peptide targeting the mitochondrion; the sequence is MRLLLRNY. A disulfide bond links C136 and C158. D153 contacts Zn(2+). E190 acts as the Proton acceptor in catalysis. Zn(2+) is bound at residue E191. The active-site Proton acceptor is D228. H318 serves as a coordination point for Zn(2+).

It belongs to the glutaminyl-peptide cyclotransferase family.

It localises to the secreted. The protein localises to the mitochondrion. The enzyme catalyses N-terminal L-glutaminyl-[peptide] = N-terminal 5-oxo-L-prolyl-[peptide] + NH4(+). Its activity is regulated as follows. Inhibited by imidazoles (imidazole, benzimidazole, 1-benzylimidazole, 1-methylimidazole, P150/03 and N-omega-acetylhistamine) and cysteamines (cysteamine and N-dimethylcysteamine). Inhibited by PDB50 1(3,4-dimethoxyphenyl)-3-(3-imidazol-1-ylpropyl)thiourea. Acts as a glutaminyl-peptide cyclotransferase. Responsible for the biosynthesis of pyroglutamyl peptides. Might be more efficient in the conversion of tri and tetrapeptides in vitro. Might have a relative preference for substrates containing hydrophobic amino acids in vitro. The sequence is that of Glutaminyl-peptide cyclotransferase from Drosophila melanogaster (Fruit fly).